The following is a 524-amino-acid chain: uncharacterized protein (524 aa).

A signal peptide spans 1 to 26 (MLKIDMWFKLKSLGFSLISLQALLAS). Cysteine 27 is lipidated: N-palmitoyl cysteine. A lipid anchor (S-diacylglycerol cysteine) is attached at cysteine 27. The interval 37 to 68 (IEEKNDSTTDNNATPFKDEQSDQGTEVNQQPK) is disordered. Polar residues predominate over residues 58-68 (DQGTEVNQQPK).

It belongs to the MG067/MG068/MG395 family.

It is found in the cell membrane. This is an uncharacterized protein from Mycoplasma genitalium (strain ATCC 33530 / DSM 19775 / NCTC 10195 / G37) (Mycoplasmoides genitalium).